The primary structure comprises 438 residues: Na(+)/H(+) antiporter NhaA 2 (438 aa).

11 helical membrane-spanning segments follow: residues 21–41, 66–86, 102–122, 130–150, 160–180, 183–203, 206–226, 308–328, 341–361, 376–396, and 410–430; these read SGGIVLLGATVLALVLANSPW, LHHWINDGLMAVFFFLVGLEL, MLPIAAAFGGMLVPALIFHFI, KGWGIPMATDIAFALGVLALL, IFLTALAIVDDLGAVLVIALF, GELAVGKLLVALVLLLILIAG, LGVQSLNFYGLLGFCLWVVLL, WVIFGVIPIFALANAGLVLQL, LGVALGLLLGKPLGILFFSWI, WMDVFGVGILGGIGFTMSLFI, and AKLGIFIASMLAGAAGFTVLS.

The protein belongs to the NhaA Na(+)/H(+) (TC 2.A.33) antiporter family.

Its subcellular location is the cell inner membrane. It carries out the reaction Na(+)(in) + 2 H(+)(out) = Na(+)(out) + 2 H(+)(in). In terms of biological role, na(+)/H(+) antiporter that extrudes sodium in exchange for external protons. This chain is Na(+)/H(+) antiporter NhaA 2, found in Syntrophotalea carbinolica (strain DSM 2380 / NBRC 103641 / GraBd1) (Pelobacter carbinolicus).